A 289-amino-acid chain; its full sequence is MSLILPLEKPALNLRPLLWLLLPLLVLATLFFWPLSLIVEQALRGANGEIGLETFRQVVDSKRFVGALLNTLQIAFFATAGCLLLGSVMSLILVFIPFPGSELIGRVVDTFIALPTFLITLAFTFIYGSAGLLNGALMSLFAFELPPVDFLYSMQGVILAEITVFTPLVMRPLMAALRQIDKSQLEAASILGAHPLRVIGQVIFPAALPALMAGGSLCLLLTTNEFGIVLFIGAKGVNTLPMMVYSKAILESDYTVACMIALINIVLSLGLFSLYRLAASRTGVRSQPC.

6 helical membrane-spanning segments follow: residues 19–39 (WLLL…SLIV), 76–96 (FFAT…LVFI), 111–131 (FIAL…GSAG), 150–170 (FLYS…PLVM), 202–222 (VIFP…LLLT), and 254–274 (YTVA…LFSL). The ABC transmembrane type-1 domain occupies 68–275 (LLNTLQIAFF…VLSLGLFSLY (208 aa)).

Belongs to the binding-protein-dependent transport system permease family.

The protein localises to the cell inner membrane. In terms of biological role, probably part of the PhnSTUV complex (TC 3.A.1.11.5) involved in 2-aminoethylphosphonate import. Probably responsible for the translocation of the substrate across the membrane. This is Putative 2-aminoethylphosphonate transport system permease protein PhnU (phnU) from Salmonella paratyphi A (strain ATCC 9150 / SARB42).